The following is a 169-amino-acid chain: Ribosome maturation factor RimP (169 aa).

It belongs to the RimP family.

Its subcellular location is the cytoplasm. In terms of biological role, required for maturation of 30S ribosomal subunits. This Coprothermobacter proteolyticus (strain ATCC 35245 / DSM 5265 / OCM 4 / BT) protein is Ribosome maturation factor RimP.